Consider the following 404-residue polypeptide: Tryptophan synthase beta chain (404 aa).

The residue at position 98 (Lys98) is an N6-(pyridoxal phosphate)lysine.

The protein belongs to the TrpB family. As to quaternary structure, tetramer of two alpha and two beta chains. It depends on pyridoxal 5'-phosphate as a cofactor.

It catalyses the reaction (1S,2R)-1-C-(indol-3-yl)glycerol 3-phosphate + L-serine = D-glyceraldehyde 3-phosphate + L-tryptophan + H2O. It participates in amino-acid biosynthesis; L-tryptophan biosynthesis; L-tryptophan from chorismate: step 5/5. Functionally, the beta subunit is responsible for the synthesis of L-tryptophan from indole and L-serine. In Rhodopseudomonas palustris (strain BisB5), this protein is Tryptophan synthase beta chain.